A 424-amino-acid chain; its full sequence is Putative pachytene checkpoint protein 2 (424 aa).

Residue 179-186 (GPPGTGKT) participates in ATP binding.

This sequence belongs to the AAA ATPase family. PCH2 subfamily.

In terms of biological role, plays a key role in chromosome recombination during meiosis. The protein is Putative pachytene checkpoint protein 2 (pch-2) of Caenorhabditis elegans.